A 249-amino-acid chain; its full sequence is MHEGYKVKLDTFEGPLDLLLHLINQFEIDIYDIPVAQITQQYMEYIHTMQHLELNIASEYLVMASTLLAIKSQMLLPKQELEDDLDEEYMEDPREELMQRLIEYRKYKEIAERLKEKESEDNQLYTRPPVVFEFKDIPEKITTNQTDISIFDMVGALKNMLKRKEWTEPHDTTVQRMDIPIETRMKEVLQQVQSNSDGLVFDKLFPSPTKNYIVVTFVAVLELMKDKQIYAVQERHFEELYLYSMEEST.

The protein belongs to the ScpA family. In terms of assembly, component of a cohesin-like complex composed of ScpA, ScpB and the Smc homodimer, in which ScpA and ScpB bind to the head domain of Smc. The presence of the three proteins is required for the association of the complex with DNA.

The protein resides in the cytoplasm. Its function is as follows. Participates in chromosomal partition during cell division. May act via the formation of a condensin-like complex containing Smc and ScpB that pull DNA away from mid-cell into both cell halves. This Oceanobacillus iheyensis (strain DSM 14371 / CIP 107618 / JCM 11309 / KCTC 3954 / HTE831) protein is Segregation and condensation protein A.